Here is a 627-residue protein sequence, read N- to C-terminus: Phosphomethylpyrimidine synthase (627 aa).

Polar residues predominate over residues 1–24 (MSATQKNNITRLEQLDRQSTQPFP). Positions 1-29 (MSATQKNNITRLEQLDRQSTQPFPNSRKV) are disordered. Residues Asn-231, Met-260, Tyr-289, His-325, 345–347 (SRG), 386–389 (DGLR), and Glu-425 contribute to the substrate site. His-429 lines the Zn(2+) pocket. Tyr-452 serves as a coordination point for substrate. His-493 lines the Zn(2+) pocket. [4Fe-4S] cluster contacts are provided by Cys-573, Cys-576, and Cys-581.

This sequence belongs to the ThiC family. In terms of assembly, homodimer. It depends on [4Fe-4S] cluster as a cofactor.

It carries out the reaction 5-amino-1-(5-phospho-beta-D-ribosyl)imidazole + S-adenosyl-L-methionine = 4-amino-2-methyl-5-(phosphooxymethyl)pyrimidine + CO + 5'-deoxyadenosine + formate + L-methionine + 3 H(+). The protein operates within cofactor biosynthesis; thiamine diphosphate biosynthesis. Catalyzes the synthesis of the hydroxymethylpyrimidine phosphate (HMP-P) moiety of thiamine from aminoimidazole ribotide (AIR) in a radical S-adenosyl-L-methionine (SAM)-dependent reaction. The chain is Phosphomethylpyrimidine synthase from Pseudomonas paraeruginosa (strain DSM 24068 / PA7) (Pseudomonas aeruginosa (strain PA7)).